Consider the following 856-residue polypeptide: DNA gyrase subunit A (856 aa).

The region spanning 45-517 (LPDARDGLKP…DDGTVTHEDL (473 aa)) is the Topo IIA-type catalytic domain. Tyr-133 serves as the catalytic O-(5'-phospho-DNA)-tyrosine intermediate. Positions 544 to 550 (QHRGGKG) match the GyrA-box motif. The segment at 822 to 856 (TVASVDTHPRTDDSSEADSGDGESESENATATTPS) is disordered. Acidic residues predominate over residues 835-847 (SSEADSGDGESES).

This sequence belongs to the type II topoisomerase GyrA/ParC subunit family. As to quaternary structure, heterotetramer, composed of two GyrA and two GyrB chains. In the heterotetramer, GyrA contains the active site tyrosine that forms a transient covalent intermediate with DNA, while GyrB binds cofactors and catalyzes ATP hydrolysis.

Its subcellular location is the cytoplasm. The enzyme catalyses ATP-dependent breakage, passage and rejoining of double-stranded DNA.. Its function is as follows. A type II topoisomerase that negatively supercoils closed circular double-stranded (ds) DNA in an ATP-dependent manner to modulate DNA topology and maintain chromosomes in an underwound state. Negative supercoiling favors strand separation, and DNA replication, transcription, recombination and repair, all of which involve strand separation. Also able to catalyze the interconversion of other topological isomers of dsDNA rings, including catenanes and knotted rings. Type II topoisomerases break and join 2 DNA strands simultaneously in an ATP-dependent manner. The polypeptide is DNA gyrase subunit A (Haloquadratum walsbyi (strain DSM 16790 / HBSQ001)).